The primary structure comprises 813 residues: Phenylalanine--tRNA ligase beta subunit (813 aa).

One can recognise a tRNA-binding domain in the interval 42-151 (AKDFNHVVIG…ADAPVGKAYA (110 aa)). Residues 405 to 480 (VKKAPVDITI…RLNGYEHIPE (76 aa)) enclose the B5 domain. Mg(2+) is bound by residues D458, D464, E467, and E468. Positions 720 to 813 (SKFPIVERDF…LKKNFDLSVR (94 aa)) constitute an FDX-ACB domain.

This sequence belongs to the phenylalanyl-tRNA synthetase beta subunit family. Type 1 subfamily. In terms of assembly, tetramer of two alpha and two beta subunits. The cofactor is Mg(2+).

The protein localises to the cytoplasm. The enzyme catalyses tRNA(Phe) + L-phenylalanine + ATP = L-phenylalanyl-tRNA(Phe) + AMP + diphosphate + H(+). The protein is Phenylalanine--tRNA ligase beta subunit of Bdellovibrio bacteriovorus (strain ATCC 15356 / DSM 50701 / NCIMB 9529 / HD100).